A 36-amino-acid chain; its full sequence is EGECGGFWWKCGSGKPACCPKYVCSPKWGLCNFPMP.

3 disulfides stabilise this stretch: Cys-4/Cys-19, Cys-11/Cys-24, and Cys-18/Cys-31.

This sequence belongs to the neurotoxin 10 (Hwtx-1) family. 44 (Jztx-4) subfamily. As to expression, expressed by the venom gland.

The protein localises to the secreted. Its function is as follows. Gating modifier of Kv2.1/KCNB1 (IC(50)=5.1 nM), Kv2.2/KCNB2 and Kv4.3/KCND3 channels (IC(50)=39 nM). Acts by shifting the channel activation to more depolarized potentials by stabilizing the resting conformation of the voltage sensor. It completely inhibits opening of the Kv2.1/KCNB1 channel at negative membrane voltages and dramatically shifts channel activation to positive voltages. May act by partitioning into lipid membranes and then by binding the voltage sensor paddle of the channel from a place within the membrane. This chain is Kappa-theraphotoxin-Pg1a, found in Chilobrachys guangxiensis (Chinese earth tiger tarantula).